The following is a 147-amino-acid chain: Probable flagellum biosynthesis repressor protein FlbT (147 aa).

This sequence belongs to the FlbT family.

Has a post-transcriptional repressor function in flagellum biogenesis. Associates with the 5'-UTR of fljK mRNA and promotes its degradation. In Mesorhizobium japonicum (strain LMG 29417 / CECT 9101 / MAFF 303099) (Mesorhizobium loti (strain MAFF 303099)), this protein is Probable flagellum biosynthesis repressor protein FlbT.